A 712-amino-acid polypeptide reads, in one-letter code: Protein TAPT1 homolog (712 aa).

Residues 1–21 (MNNVPSTSRENSRNPSESSSS) are compositionally biased toward low complexity. Disordered regions lie at residues 1–22 (MNNV…SSSI) and 44–66 (ITMS…EIET). The next 7 helical transmembrane spans lie at 196-216 (FFYL…GALL), 222-242 (TSAE…SMLI), 305-325 (TCGH…LVIL), 379-399 (HIFA…NWNI), 402-422 (FTEM…VDWL), 470-490 (GFIP…TFTL), and 497-517 (IIFG…GVVM). Residues 596–619 (EIRRSTDRETAVSHLTARSDERTP) are compositionally biased toward basic and acidic residues. The interval 596–712 (EIRRSTDRET…MPEQGVQRIE (117 aa)) is disordered. Polar residues predominate over residues 656 to 667 (TENNTNSNSEQA). Over residues 675-692 (TAAPVTSSASTNTNATSS) the composition is skewed to low complexity.

This sequence belongs to the TAPT1 family.

Its subcellular location is the membrane. The sequence is that of Protein TAPT1 homolog from Caenorhabditis elegans.